The following is an 802-amino-acid chain: E3 ubiquitin-protein ligase RNF10 (802 aa).

Composition is skewed to low complexity over residues 1 to 31 (MPQS…SGSS), 78 to 90 (SNQS…QKSK), and 104 to 113 (SKPFSSSSNG). Residues 1–134 (MPQSSPSTAA…AEFSPAQFSG (134 aa)) are disordered. S5 bears the Phosphoserine mark. A Phosphoserine modification is found at S110. Basic and acidic residues predominate over residues 114–124 (GRRDEVAEAQR). S128 is subject to Phosphoserine. The RING-type zinc finger occupies 225–267 (CPICLYPPTAAKITRCGHIFCWACILHYLSLSERTWSKCPICY). Residues 645–654 (DSALGPTSTE) show a composition bias toward polar residues. Disordered regions lie at residues 645–664 (DSAL…LSPL), 716–753 (DGWP…VPSF), and 767–802 (KLDT…VHTK). Over residues 716–728 (DGWPKAAPKKDDN) the composition is skewed to basic and acidic residues. Over residues 793–802 (LFSTSVVHTK) the composition is skewed to polar residues.

Belongs to the RNF10 family. In terms of assembly, interacts with MEOX2.

The protein localises to the cytoplasm. It is found in the nucleus. The enzyme catalyses S-ubiquitinyl-[E2 ubiquitin-conjugating enzyme]-L-cysteine + [acceptor protein]-L-lysine = [E2 ubiquitin-conjugating enzyme]-L-cysteine + N(6)-ubiquitinyl-[acceptor protein]-L-lysine.. It participates in protein modification; protein ubiquitination. Its function is as follows. E3 ubiquitin-protein ligase that catalyzes monoubiquitination of 40S ribosomal proteins RPS2/us5 and RPS3/us3 in response to ribosome stalling. Part of a ribosome quality control that takes place when ribosomes have stalled during translation initiation (iRQC): RNF10 acts by mediating monoubiquitination of RPS2/us5 and RPS3/us3, promoting their degradation by the proteasome. Also promotes ubiquitination of 40S ribosomal proteins in response to ribosome stalling during translation elongation. The action of RNF10 in iRQC is counteracted by USP10. May also act as a transcriptional factor involved in the regulation of MAG (Myelin-associated glycoprotein) expression. Acts as a regulator of Schwann cell differentiation and myelination. This Rattus norvegicus (Rat) protein is E3 ubiquitin-protein ligase RNF10.